We begin with the raw amino-acid sequence, 258 residues long: DNA repair protein RecO (258 aa).

This sequence belongs to the RecO family.

In terms of biological role, involved in DNA repair and RecF pathway recombination. The sequence is that of DNA repair protein RecO from Lactiplantibacillus plantarum (strain ATCC BAA-793 / NCIMB 8826 / WCFS1) (Lactobacillus plantarum).